The chain runs to 245 residues: P2Y purinoceptor 13 (245 aa).

The Extracellular portion of the chain corresponds to 1 to 9 (QLRAFVCRL). Cys7 and Cys85 are joined by a disulfide. The helical transmembrane segment at 10–30 (SSVIFYETMYVGIVLLGLIAF) threads the bilayer. At 31–35 (DRFLK) the chain is on the cytoplasmic side. A helical membrane pass occupies residues 36 to 56 (IIRPLRNIFLKKTVFAKTVSV). The Extracellular portion of the chain corresponds to 57-85 (FIWSFFFFISLPNMILSNKEATPSSVKKC). A helical membrane pass occupies residues 86 to 106 (ASLKGPLGLKWHQIVNNISQF). At 107–126 (IFWTVFVLMLVFYVVIAKKV) the chain is on the cytoplasmic side. Residues 127–147 (YDSYRKSKSKDRKNNKKLEGK) form a helical membrane-spanning segment. The Extracellular portion of the chain corresponds to 148–174 (VFVVVAVFFVCFAPFHFTRVPYTYSQT). The helical transmembrane segment at 175–195 (NNKTDCRLQNQLFIAKETTLF) threads the bilayer. The Cytoplasmic segment spans residues 196-245 (LAATNICMDPLIYIFLCKKFTEKLPCMRGRKTIASSQENQSSQTDNITLG).

It belongs to the G-protein coupled receptor 1 family.

It localises to the cell membrane. In terms of biological role, receptor for ADP. Coupled to G(i)-proteins. May play a role in hematopoiesis and the immune system. The sequence is that of P2Y purinoceptor 13 (P2RY13) from Macaca fascicularis (Crab-eating macaque).